The primary structure comprises 133 residues: Thioredoxin H2 (133 aa).

The disordered stretch occupies residues 1 to 22; it reads MGGALSTVFGSGEDATAAGTES. A Thioredoxin domain is found at 6-133; that stretch reads STVFGSGEDA…LEKKVSKLRA (128 aa). Catalysis depends on nucleophile residues Cys-59 and Cys-62. Cys-59 and Cys-62 are joined by a disulfide.

It belongs to the thioredoxin family. Plant H-type subfamily. In terms of assembly, interacts with MDH1.

Its subcellular location is the cytoplasm. It is found in the mitochondrion. Thiol-disulfide oxidoreductase probably involved in the redox regulation of a number of cytosolic enzymes. Possesses insulin disulfide bonds reducing activity. In Arabidopsis thaliana (Mouse-ear cress), this protein is Thioredoxin H2 (TRX2).